Reading from the N-terminus, the 408-residue chain is 1-deoxy-D-xylulose 5-phosphate reductoisomerase (408 aa).

Thr27, Gly28, Ser29, Ile30, Ala53, Arg54, Asn55, and Asn140 together coordinate NADPH. Lys141 provides a ligand contact to 1-deoxy-D-xylulose 5-phosphate. An NADPH-binding site is contributed by Glu142. Residue Asp166 participates in Mn(2+) binding. 1-deoxy-D-xylulose 5-phosphate is bound by residues Ser167, Glu168, Ser192, and His215. Glu168 lines the Mn(2+) pocket. Gly221 is an NADPH binding site. The 1-deoxy-D-xylulose 5-phosphate site is built by Ser228, Asn233, Lys234, and Glu237. Mn(2+) is bound at residue Glu237.

It belongs to the DXR family. Mg(2+) is required as a cofactor. The cofactor is Mn(2+).

The catalysed reaction is 2-C-methyl-D-erythritol 4-phosphate + NADP(+) = 1-deoxy-D-xylulose 5-phosphate + NADPH + H(+). It participates in isoprenoid biosynthesis; isopentenyl diphosphate biosynthesis via DXP pathway; isopentenyl diphosphate from 1-deoxy-D-xylulose 5-phosphate: step 1/6. Catalyzes the NADPH-dependent rearrangement and reduction of 1-deoxy-D-xylulose-5-phosphate (DXP) to 2-C-methyl-D-erythritol 4-phosphate (MEP). The chain is 1-deoxy-D-xylulose 5-phosphate reductoisomerase from Nitratidesulfovibrio vulgaris (strain ATCC 29579 / DSM 644 / CCUG 34227 / NCIMB 8303 / VKM B-1760 / Hildenborough) (Desulfovibrio vulgaris).